The following is a 115-amino-acid chain: Ribonuclease P protein component (115 aa).

The protein belongs to the RnpA family. As to quaternary structure, consists of a catalytic RNA component (M1 or rnpB) and a protein subunit.

The enzyme catalyses Endonucleolytic cleavage of RNA, removing 5'-extranucleotides from tRNA precursor.. Its function is as follows. RNaseP catalyzes the removal of the 5'-leader sequence from pre-tRNA to produce the mature 5'-terminus. It can also cleave other RNA substrates such as 4.5S RNA. The protein component plays an auxiliary but essential role in vivo by binding to the 5'-leader sequence and broadening the substrate specificity of the ribozyme. The chain is Ribonuclease P protein component from Buchnera aphidicola subsp. Acyrthosiphon pisum (strain APS) (Acyrthosiphon pisum symbiotic bacterium).